An 824-amino-acid chain; its full sequence is Protein bicaudal D homolog 2 (824 aa).

Position 2 is an N-acetylserine (Ser-2). Residues 20–269 are a coiled coil; the sequence is EWLRAEVKRL…ELSHYMSIND (250 aa). Residues 25 to 398 form an interacts with DYNLL1, DYNC1H1, DYNC1I2, DCTN1 and DCTN2 region; sequence EVKRLSHELA…RLTENLSALR (374 aa). Phosphoserine occurs at positions 190, 224, and 318. The tract at residues 311 to 330 is disordered; the sequence is LPLDNKTSTPKKEGLAPPSP. Thr-319 bears the Phosphothreonine mark. The tract at residues 334-599 is interaction with KIF5A; that stretch reads SDLLSELNIS…LLAPEAGRAD (266 aa). Positions 338–537 form a coiled coil; the sequence is SELNISEIQK…VTFSEELANL (200 aa). Residues Ser-343 and Ser-395 each carry the phosphoserine modification. Disordered regions lie at residues 398-425, 559-622, and 804-824; these read RRLQASKERQTALDNEKDRDSHEDGDYY, EGQG…DPRR, and EQTRRGRAKAAPKTKPATPSL. Residues 402-422 show a composition bias toward basic and acidic residues; it reads ASKERQTALDNEKDRDSHEDG. 3 positions are modified to phosphoserine: Ser-568, Ser-574, and Ser-582. The interval 590 to 824 is interaction with RANBP2; sequence LLAPEAGRAD…PKTKPATPSL (235 aa). At Thr-602 the chain carries Phosphothreonine. A compositionally biased stretch (low complexity) spans 604 to 618; that stretch reads DSSPSPGSSLPSPLS. Residues 666–808 are a coiled coil; it reads DKDKEALMEE…LELDHEQTRR (143 aa). An interacts with RAB6A region spans residues 666–814; it reads DKDKEALMEE…QTRRGRAKAA (149 aa). Thr-821 is modified (phosphothreonine). Position 823 is a phosphoserine (Ser-823).

The protein belongs to the BicD family. As to quaternary structure, part of a tripartite complex with dynein and dynactin, acts an adapter linking the dynein motor complex and dynactin. Interacts with CPNE4 (via VWFA domain). Interacts with RAB6A. Interacts with NEK9. Interacts with DNAI1. Interacts with DYNC1H1. Interacts with RANBP2. Binds preferentially to tyrosinated microtubules than to detyrosinated microtubules. Interacts with DYNLL1, DYNC1I2; DCTN1, DCTN2 and KIF5A. Interacts with KIF1C. Phosphorylated by NEK9 in vitro. Ubiquitous.

The protein localises to the golgi apparatus. It is found in the cytoplasm. Its subcellular location is the cytoskeleton. The protein resides in the nucleus envelope. It localises to the nucleus. The protein localises to the nuclear pore complex. In terms of biological role, acts as an adapter protein linking the dynein motor complex to various cargos and converts dynein from a non-processive to a highly processive motor in the presence of dynactin. Facilitates and stabilizes the interaction between dynein and dynactin and activates dynein processivity (the ability to move along a microtubule for a long distance without falling off the track). Facilitates the binding of RAB6A to the Golgi by stabilizing its GTP-bound form. Regulates coat complex coatomer protein I (COPI)-independent Golgi-endoplasmic reticulum transport via its interaction with RAB6A and recruitment of the dynein-dynactin motor complex. Contributes to nuclear and centrosomal positioning prior to mitotic entry through regulation of both dynein and kinesin-1. During G2 phase of the cell cycle, associates with RANBP2 at the nuclear pores and recruits dynein and dynactin to the nuclear envelope to ensure proper positioning of the nucleus relative to centrosomes prior to the onset of mitosis. This Homo sapiens (Human) protein is Protein bicaudal D homolog 2.